A 398-amino-acid chain; its full sequence is uncharacterized protein (398 aa).

Lys-212 is subject to N6-(pyridoxal phosphate)lysine.

The protein belongs to the trans-sulfuration enzymes family. The cofactor is pyridoxal 5'-phosphate.

This is an uncharacterized protein from Schizosaccharomyces pombe (strain 972 / ATCC 24843) (Fission yeast).